Reading from the N-terminus, the 495-residue chain is UDP-N-acetylmuramoyl-L-alanyl-D-glutamate--2,6-diaminopimelate ligase (495 aa).

UDP-N-acetyl-alpha-D-muramoyl-L-alanyl-D-glutamate is bound at residue serine 29. Glycine 111–serine 117 lines the ATP pocket. UDP-N-acetyl-alpha-D-muramoyl-L-alanyl-D-glutamate is bound by residues threonine 153–threonine 154, serine 180, glutamine 186, and arginine 188. Lysine 220 is modified (N6-carboxylysine). Meso-2,6-diaminopimelate-binding positions include arginine 384, aspartate 408–arginine 411, glycine 459, and glutamate 463. Residues aspartate 408–arginine 411 carry the Meso-diaminopimelate recognition motif motif.

Belongs to the MurCDEF family. MurE subfamily. Mg(2+) is required as a cofactor. In terms of processing, carboxylation is probably crucial for Mg(2+) binding and, consequently, for the gamma-phosphate positioning of ATP.

Its subcellular location is the cytoplasm. It carries out the reaction UDP-N-acetyl-alpha-D-muramoyl-L-alanyl-D-glutamate + meso-2,6-diaminopimelate + ATP = UDP-N-acetyl-alpha-D-muramoyl-L-alanyl-gamma-D-glutamyl-meso-2,6-diaminopimelate + ADP + phosphate + H(+). The protein operates within cell wall biogenesis; peptidoglycan biosynthesis. Functionally, catalyzes the addition of meso-diaminopimelic acid to the nucleotide precursor UDP-N-acetylmuramoyl-L-alanyl-D-glutamate (UMAG) in the biosynthesis of bacterial cell-wall peptidoglycan. In Xanthomonas campestris pv. campestris (strain 8004), this protein is UDP-N-acetylmuramoyl-L-alanyl-D-glutamate--2,6-diaminopimelate ligase.